The chain runs to 338 residues: 2,3-dihydroxybenzoate decarboxylase (338 aa).

The active site involves cysteine 251.

It belongs to the metallo-dependent hydrolases superfamily. As to quaternary structure, homotetramer.

It catalyses the reaction 2,3-dihydroxybenzoate + H(+) = catechol + CO2. The protein operates within aromatic compound metabolism; benzoate degradation via hydroxylation. In terms of biological role, has an absolute substrate specificity for 2,3-DHBA. In Aspergillus oryzae (strain ATCC 42149 / RIB 40) (Yellow koji mold), this protein is 2,3-dihydroxybenzoate decarboxylase.